The chain runs to 723 residues: UPF0313 protein YgiQ (723 aa).

Residues 372 to 650 (AYEMIRFSIN…KALLRYHDPA (279 aa)) enclose the Radical SAM core domain. Cys386, Cys390, and Cys393 together coordinate [4Fe-4S] cluster. A disordered region spans residues 686–723 (EARRQNRNTRPALTKHTPVEHQRQGLAANKKRGKGAGR). Over residues 714–723 (NKKRGKGAGR) the composition is skewed to basic residues.

The protein belongs to the UPF0313 family. It depends on [4Fe-4S] cluster as a cofactor.

The polypeptide is UPF0313 protein YgiQ (Salmonella typhimurium (strain LT2 / SGSC1412 / ATCC 700720)).